The chain runs to 236 residues: Lectin (236 aa).

Asparagine 118 is a glycosylation site (N-linked (GlcNAc...) asparagine).

Belongs to the leguminous lectin family. As to quaternary structure, homodimer of noncovalently associated chains.

Its function is as follows. D-mannose and D-glucose specific lectin. This Onobrychis viciifolia (Common sainfoin) protein is Lectin.